The following is an 843-amino-acid chain: Axin-2 (843 aa).

Positions 1-75 are disordered; the sequence is MSSAMLVTCL…EGRASPDSPL (75 aa). A Tankyrase-binding motif motif is present at residues 21–30; it reads APRPPVPGEE. Residues 56–69 show a composition bias toward basic and acidic residues; that stretch reads RRNEDGLGEPEGRA. Residues 81 to 200 enclose the RGS domain; it reads SLHSLLGDQD…LTSDIYLEYV (120 aa). Residues 327–413 form an interaction with GSK3B region; the sequence is VGSKKQLQRE…REGSELTLNS (87 aa). Residues 334-393 are interaction with SIAH1 and SIAH2; that stretch reads QREMHRSVKANGQVSLPHFPRTHRLPKEMTPVEPATFAAELISRLEKLKLELESRHSLEE. Disordered stretches follow at residues 396-435, 447-494, 561-674, and 718-748; these read QQIR…EEDP, LKTP…AASP, APET…RTTP, and ASQQ…EDHK. The tract at residues 413–476 is interaction with beta-catenin; that stretch reads SREGAPTQHP…PDHHHHHHSQ (64 aa). 2 stretches are compositionally biased toward low complexity: residues 477–494 and 588–597; these read YHSL…AASP and PGLALPAREG. Over residues 727-741 the composition is skewed to polar residues; it reads SATVQTGATPFSNPS. The 83-residue stretch at 761–843 folds into the DIX domain; sequence ASELVVTYFF…RILGKVERID (83 aa).

Interacts with glycogen synthase kinase-3 beta (GSK3B) and beta-catenin. The interaction between axin and beta-catenin occurs via the armadillo repeats contained in beta-catenin. Interacts with SMAD7 and RNF111. Interacts with ANKRD6. Interacts with SIAH1. Interacts with SIAH2. Probably phosphorylated by GSK3B and dephosphorylated by PP2A. In terms of processing, ADP-ribosylated by tankyrase TNKS and TNKS2. Poly-ADP-ribosylated protein is recognized by RNF146, followed by ubiquitination and subsequent activation of the Wnt signaling pathway. Post-translationally, ubiquitinated by RNF146 when poly-ADP-ribosylated, leading to its degradation and subsequent activation of the Wnt signaling pathway. Deubiquitinated by USP34, deubiquitinated downstream of beta-catenin stabilization step: deubiquitination is important Wnt signaling to positively regulate beta-catenin (CTNBB1)-mediated transcription. Expressed in brain and lymphoblast.

It is found in the cytoplasm. In terms of biological role, inhibitor of the Wnt signaling pathway. Down-regulates beta-catenin. Probably facilitate the phosphorylation of beta-catenin and APC by GSK3B. In Homo sapiens (Human), this protein is Axin-2 (AXIN2).